The chain runs to 276 residues: Undecaprenyl-diphosphatase (276 aa).

A run of 8 helical transmembrane segments spans residues 6–26 (IEILKVIFLGIVEGITEWLPI), 49–69 (EMFFVVIQLGAILAVVVMFWN), 89–109 (FSLWFKVAVACVPSAIMGILF), 117–137 (LHTPVVIAIMLILYGVLFIVI), 151–171 (LADISYKTALMIGVFQVLSLI), 181–201 (IIGALLIGVSRVAAAEFTFFL), 224–244 (AELLTLVIGMAVAFAVSVFVI), and 256–276 (FKVFGWYRIVLGILVLLITAI).

This sequence belongs to the UppP family.

The protein localises to the cell membrane. The catalysed reaction is di-trans,octa-cis-undecaprenyl diphosphate + H2O = di-trans,octa-cis-undecaprenyl phosphate + phosphate + H(+). Functionally, catalyzes the dephosphorylation of undecaprenyl diphosphate (UPP). Confers resistance to bacitracin. This is Undecaprenyl-diphosphatase from Enterococcus faecalis (Streptococcus faecalis).